The following is a 176-amino-acid chain: Inorganic pyrophosphatase (176 aa).

Positions 31, 45, and 57 each coordinate substrate. Residues Asp-67, Asp-72, and Asp-104 each contribute to the Mg(2+) site. Tyr-142 is a substrate binding site.

Belongs to the PPase family. In terms of assembly, homohexamer. Mg(2+) serves as cofactor.

The protein resides in the cytoplasm. The catalysed reaction is diphosphate + H2O = 2 phosphate + H(+). Catalyzes the hydrolysis of inorganic pyrophosphate (PPi) forming two phosphate ions. The protein is Inorganic pyrophosphatase of Haemophilus influenzae (strain ATCC 51907 / DSM 11121 / KW20 / Rd).